A 207-amino-acid chain; its full sequence is Large ribosomal subunit protein bL25 (207 aa).

Belongs to the bacterial ribosomal protein bL25 family. CTC subfamily. As to quaternary structure, part of the 50S ribosomal subunit; part of the 5S rRNA/L5/L18/L25 subcomplex. Contacts the 5S rRNA. Binds to the 5S rRNA independently of L5 and L18.

This is one of the proteins that binds to the 5S RNA in the ribosome where it forms part of the central protuberance. This Brucella abortus (strain S19) protein is Large ribosomal subunit protein bL25.